The chain runs to 329 residues: MAELFWFEKYRPRSFDEVVDLEEVKARLREFVKAGNMPHLLFYGPPGTGKTTMALVLARELYGEYWRENTLELNASDERGINVIRERVKEFARTAPVGKAPFKLVILDEADNMTSDAQQALRRIMEIYAQNTRFILLANYVSRIIDPIISRCAVFRFSPMPRSLMAERLKFIAKNEGVELREDAINMIYELSEGDMRKAINLLQVAAATNKVVDANAVASAAIAVRPADIIELFNLAISGDFVKAREKLRELMYLKGIAGADFIRAFQRELIRMPIDDDIKAEIAELLADVDYRLTQGADEEIQLTYLLTKLGAIGRRVKPATTQPRKK.

ATP is bound at residue 44–51 (GPPGTGKT).

It belongs to the activator 1 small subunits family. RfcS subfamily. Heteromultimer composed of small subunits (RfcS) and large subunits (RfcL).

Part of the RFC clamp loader complex which loads the PCNA sliding clamp onto DNA. The polypeptide is Replication factor C small subunit 1 (Pyrobaculum aerophilum (strain ATCC 51768 / DSM 7523 / JCM 9630 / CIP 104966 / NBRC 100827 / IM2)).